Reading from the N-terminus, the 401-residue chain is Imidazolonepropionase (401 aa).

Residues H66 and H68 each coordinate Fe(3+). Positions 66 and 68 each coordinate Zn(2+). 4-imidazolone-5-propanoate is bound by residues R75, Y138, and H171. Y138 contributes to the N-formimidoyl-L-glutamate binding site. Residue H236 participates in Fe(3+) binding. Residue H236 participates in Zn(2+) binding. Q239 is a binding site for 4-imidazolone-5-propanoate. D311 lines the Fe(3+) pocket. D311 contributes to the Zn(2+) binding site. N-formimidoyl-L-glutamate-binding residues include N313 and G315. T316 contacts 4-imidazolone-5-propanoate.

It belongs to the metallo-dependent hydrolases superfamily. HutI family. Zn(2+) is required as a cofactor. The cofactor is Fe(3+).

Its subcellular location is the cytoplasm. The catalysed reaction is 4-imidazolone-5-propanoate + H2O = N-formimidoyl-L-glutamate. It participates in amino-acid degradation; L-histidine degradation into L-glutamate; N-formimidoyl-L-glutamate from L-histidine: step 3/3. Its function is as follows. Catalyzes the hydrolytic cleavage of the carbon-nitrogen bond in imidazolone-5-propanoate to yield N-formimidoyl-L-glutamate. It is the third step in the universal histidine degradation pathway. The polypeptide is Imidazolonepropionase (Pseudomonas fluorescens (strain Pf0-1)).